We begin with the raw amino-acid sequence, 296 residues long: Homoserine kinase (296 aa).

Residue 86–96 participates in ATP binding; the sequence is KAGSGLGSSAA.

It belongs to the GHMP kinase family. Homoserine kinase subfamily.

The protein resides in the cytoplasm. It carries out the reaction L-homoserine + ATP = O-phospho-L-homoserine + ADP + H(+). Its pathway is amino-acid biosynthesis; L-threonine biosynthesis; L-threonine from L-aspartate: step 4/5. In terms of biological role, catalyzes the ATP-dependent phosphorylation of L-homoserine to L-homoserine phosphate. The sequence is that of Homoserine kinase (thrB) from Methanocaldococcus jannaschii (strain ATCC 43067 / DSM 2661 / JAL-1 / JCM 10045 / NBRC 100440) (Methanococcus jannaschii).